The primary structure comprises 101 residues: Small ribosomal subunit protein uS14 (101 aa).

The protein belongs to the universal ribosomal protein uS14 family. Part of the 30S ribosomal subunit. Contacts proteins S3 and S10.

Functionally, binds 16S rRNA, required for the assembly of 30S particles and may also be responsible for determining the conformation of the 16S rRNA at the A site. This Pasteurella multocida (strain Pm70) protein is Small ribosomal subunit protein uS14.